Here is a 117-residue protein sequence, read N- to C-terminus: Non-specific lipid-transfer protein 3 (117 aa).

A signal peptide spans M1–A25. 4 disulfides stabilise this stretch: C29–C76, C39–C53, C54–C99, and C74–C113.

Belongs to the plant LTP family.

Plant non-specific lipid-transfer proteins transfer phospholipids as well as galactolipids across membranes. May play a role in wax or cutin deposition in the cell walls of expanding epidermal cells and certain secretory tissues. This is Non-specific lipid-transfer protein 3 (LTP3) from Brassica napus (Rape).